The sequence spans 358 residues: Ferredoxin--NADP reductase (358 aa).

Residues Asp-38, Gln-46, Tyr-51, Val-91, Phe-126, Asp-301, and Thr-341 each coordinate FAD.

It belongs to the ferredoxin--NADP reductase type 2 family. As to quaternary structure, homodimer. Requires FAD as cofactor.

The enzyme catalyses 2 reduced [2Fe-2S]-[ferredoxin] + NADP(+) + H(+) = 2 oxidized [2Fe-2S]-[ferredoxin] + NADPH. In Paracidovorax citrulli (strain AAC00-1) (Acidovorax citrulli), this protein is Ferredoxin--NADP reductase.